The sequence spans 495 residues: Phytochrome A type 5 (495 aa).

Residues 1-21 (MSSSRPASSSSSRNRQSSQAR) show a composition bias toward low complexity. The disordered stretch occupies residues 1 to 24 (MSSSRPASSSSSRNRQSSQARVLA). A GAF domain is found at 217-402 (SMEMLCNTVV…VFAVHVNREF (186 aa)). Cys322 provides a ligand contact to phytochromobilin.

This sequence belongs to the phytochrome family. In terms of assembly, homodimer. Contains one covalently linked phytochromobilin chromophore.

Regulatory photoreceptor which exists in two forms that are reversibly interconvertible by light: the Pr form that absorbs maximally in the red region of the spectrum and the Pfr form that absorbs maximally in the far-red region. Photoconversion of Pr to Pfr induces an array of morphogenic responses, whereas reconversion of Pfr to Pr cancels the induction of those responses. Pfr controls the expression of a number of nuclear genes including those encoding the small subunit of ribulose-bisphosphate carboxylase, chlorophyll A/B binding protein, protochlorophyllide reductase, rRNA, etc. It also controls the expression of its own gene(s) in a negative feedback fashion. This chain is Phytochrome A type 5 (PHYA5), found in Avena sativa (Oat).